Here is a 555-residue protein sequence, read N- to C-terminus: Alpha-copaene synthase (555 aa).

Mg(2+) contacts are provided by Asp-312, Asp-316, Asp-452, Ser-456, and Glu-460. A DDXXD motif motif is present at residues 312 to 316 (DDTYD).

It belongs to the terpene synthase family. Mg(2+) serves as cofactor. Mainly expressed in sunflower trichomes.

The catalysed reaction is (2E,6E)-farnesyl diphosphate = alpha-copaene + diphosphate. It catalyses the reaction (2E,6E)-farnesyl diphosphate = alpha-muurolene + diphosphate. It carries out the reaction (2E,6E)-farnesyl diphosphate = alpha-humulene + diphosphate. The protein operates within secondary metabolite biosynthesis; terpenoid biosynthesis. In terms of biological role, involved in the biosynthesis of germacrene-derived sesquiterpene lactones. Catalyzes the cyclization of farnesyl diphosphate to alpha-copaene, delta-cadinene, alpha-muurolene, beta-caryophyllene and alpha-humulene. This chain is Alpha-copaene synthase (CS), found in Helianthus annuus (Common sunflower).